The sequence spans 207 residues: Superoxide dismutase [Mn] (207 aa).

4 residues coordinate Mn(2+): H28, H76, D160, and H164.

The protein belongs to the iron/manganese superoxide dismutase family. Mn(2+) serves as cofactor.

The enzyme catalyses 2 superoxide + 2 H(+) = H2O2 + O2. Functionally, destroys superoxide anion radicals which are normally produced within the cells and which are toxic to biological systems. This is Superoxide dismutase [Mn] (sodA) from Mycobacterium avium.